The chain runs to 135 residues: Interleukin-4 (135 aa).

Residues 1–24 (MGLTYQLIPVLVCLLVCTSHFVHG) form the signal peptide. 3 disulfide bridges follow: cysteine 27–cysteine 135, cysteine 48–cysteine 85, and cysteine 70–cysteine 105. Residue asparagine 62 is glycosylated (N-linked (GlcNAc...) asparagine).

It belongs to the IL-4/IL-13 family.

It is found in the secreted. Participates in at least several B-cell activation processes as well as of other cell types. It is a costimulator of DNA-synthesis. It induces the expression of class II MHC molecules on resting B-cells. It enhances both secretion and cell surface expression of IgE and IgG1. It also regulates the expression of the low affinity Fc receptor for IgE (CD23) on both lymphocytes and monocytes. Positively regulates IL31RA expression in macrophages. Stimulates autophagy in dendritic cells by interfering with mTORC1 signaling and through the induction of RUFY4. The polypeptide is Interleukin-4 (IL4) (Bubalus carabanensis (Swamp type water buffalo)).